Here is a 406-residue protein sequence, read N- to C-terminus: MDGWRRMPRWGLLLLLWGSCTFGLPTDTTTFKRIFLKRMPSIRESLKERGVDMARLGPEWSQPMKRLALGNTTSSVILTNYMDTQYYGEIGIGTPPQTFKVVFDTGSSNVWVPSSKCSRLYTACVYHKLFDASDSSSYKHNGTELTLRYSTGTVSGFLSQDIITVGGITVTQMFGEVTEMPALPFMLAEFDGVVGMGFIEQAIGRVTPIFDNILSQGVLKEDVFSFYYNRDSENAQSLGGQIVLGGSDPQHYEGNFHYINLIKTGVWQIQMKGVSVGSSTLLCEDGCLALVDTGASYISGSTSSIEKLMEALGAKKRLFDYVVKCNEGPTLPDISFHLGGKEYTLTSADYVFQESYSSKKLCTLAIHAMDIPPPTGPTWALGATFIRKFYTEFDRRNNRIGFALAR.

The signal sequence occupies residues 1–23 (MDGWRRMPRWGLLLLLWGSCTFG). A propeptide spans 24–66 (LPTDTTTFKRIFLKRMPSIRESLKERGVDMARLGPEWSQPMKR) (activation peptide). Asn-71 carries an N-linked (GlcNAc...) asparagine glycan. Residues 86–403 (YYGEIGIGTP…DRRNNRIGFA (318 aa)) enclose the Peptidase A1 domain. Residue Asp-104 is part of the active site. Cys-117 and Cys-124 are joined by a disulfide. A glycan (N-linked (GlcNAc...) asparagine) is linked at Asn-141. An intrachain disulfide couples Cys-283 to Cys-287. Residue Asp-292 is part of the active site. Cys-325 and Cys-362 are disulfide-bonded.

The protein belongs to the peptidase A1 family. As to quaternary structure, interacts with ATP6AP2.

The protein resides in the secreted. The protein localises to the membrane. The enzyme catalyses Cleavage of Leu-|-Xaa bond in angiotensinogen to generate angiotensin I.. With respect to regulation, interaction with ATP6AP2 results in a 5-fold increased efficiency in angiotensinogen processing. Functionally, renin is a highly specific endopeptidase, whose only known function is to generate angiotensin I from angiotensinogen in the plasma, initiating a cascade of reactions that produce an elevation of blood pressure and increased sodium retention by the kidney. The sequence is that of Renin (REN) from Macaca fascicularis (Crab-eating macaque).